Here is a 211-residue protein sequence, read N- to C-terminus: ATP-dependent dethiobiotin synthetase BioD (211 aa).

Position 10–15 (10–15 (GIGKTY)) interacts with ATP. Threonine 14 contacts Mg(2+). The active site involves lysine 35. Serine 39 contributes to the substrate binding site. ATP contacts are provided by residues aspartate 44, 105-108 (EGAG), and 165-166 (NC). Aspartate 44 and glutamate 105 together coordinate Mg(2+).

It belongs to the dethiobiotin synthetase family. In terms of assembly, homodimer. Mg(2+) serves as cofactor.

The protein resides in the cytoplasm. It catalyses the reaction (7R,8S)-7,8-diammoniononanoate + CO2 + ATP = (4R,5S)-dethiobiotin + ADP + phosphate + 3 H(+). The protein operates within cofactor biosynthesis; biotin biosynthesis; biotin from 7,8-diaminononanoate: step 1/2. Its function is as follows. Catalyzes a mechanistically unusual reaction, the ATP-dependent insertion of CO2 between the N7 and N8 nitrogen atoms of 7,8-diaminopelargonic acid (DAPA, also called 7,8-diammoniononanoate) to form a ureido ring. The protein is ATP-dependent dethiobiotin synthetase BioD of Methanococcus vannielii (strain ATCC 35089 / DSM 1224 / JCM 13029 / OCM 148 / SB).